The following is a 261-amino-acid chain: 5'-nucleotidase SurE (261 aa).

A divalent metal cation-binding residues include D8, D9, S40, and N94.

This sequence belongs to the SurE nucleotidase family. It depends on a divalent metal cation as a cofactor.

The protein localises to the cytoplasm. It catalyses the reaction a ribonucleoside 5'-phosphate + H2O = a ribonucleoside + phosphate. In terms of biological role, nucleotidase that shows phosphatase activity on nucleoside 5'-monophosphates. In Anaplasma marginale (strain St. Maries), this protein is 5'-nucleotidase SurE.